Here is a 538-residue protein sequence, read N- to C-terminus: Dihomomethionine N-hydroxylase (538 aa).

A helical transmembrane segment spans residues 8 to 28 (LPYPFHILLVFILSMASITLL).

This sequence belongs to the cytochrome P450 family. The cofactor is heme. As to expression, highly expressed in cotyledons, leaves, stems and siliques. Detected in flowers and lateral roots, but not in the main root. Expressed only in the vascular bundles in apical plant parts.

The protein localises to the endoplasmic reticulum membrane. The enzyme catalyses an L-polyhomomethionine + 2 reduced [NADPH--hemoprotein reductase] + 2 O2 = an (E)-omega-(methylsulfanyl)-alkanal oxime + 2 oxidized [NADPH--hemoprotein reductase] + CO2 + 3 H2O + 2 H(+). It carries out the reaction L-dihomomethionine + 2 reduced [NADPH--hemoprotein reductase] + 2 O2 = (E)-5-(methylsulfanyl)pentanal oxime + 2 oxidized [NADPH--hemoprotein reductase] + CO2 + 3 H2O + 2 H(+). It catalyses the reaction L-trihomomethionine + 2 reduced [NADPH--hemoprotein reductase] + 2 O2 = (E)-6-(methylsulfanyl)hexanal oxime + 2 oxidized [NADPH--hemoprotein reductase] + CO2 + 3 H2O + 2 H(+). Its function is as follows. Catalyzes the conversion of the short chain elongated methionines di-, tri-, and tetrahomomethionine to their respective aldoximes 5-methylthiopentanaldoxime, 6-methylthiohexanaldoxime, and 7-methylheptanaldoxime. The sequence is that of Dihomomethionine N-hydroxylase (CYP79F1) from Arabidopsis thaliana (Mouse-ear cress).